The sequence spans 46 residues: Lantibiotic streptin (46 aa).

Positions 1-24 are excised as a propeptide; the sequence is MNNTIKDFDLDLKTNKKDTATPYV.

This sequence belongs to the type A lantibiotic family. In terms of processing, maturation of lantibiotics involves the enzymatic conversion of Thr, and Ser into dehydrated AA and the formation of thioether bonds with cysteine. This is followed by membrane translocation and cleavage of the modified precursor.

In terms of biological role, lanthionine-containing peptide antibiotic (lantibiotic) active on certain Gram-positive bacteria. The bactericidal activity of lantibiotics is based on depolarization of energized bacterial cytoplasmic membranes, initiated by the formation of aqueous transmembrane pores. The sequence is that of Lantibiotic streptin (srtA) from Streptococcus pyogenes serotype M1.